The sequence spans 463 residues: L-seryl-tRNA(Sec) selenium transferase (463 aa).

At lysine 295 the chain carries N6-(pyridoxal phosphate)lysine.

Belongs to the SelA family. Homodecamer; pentamer of dimers. Binds only one seryl-tRNA(Sec) per dimer. It depends on pyridoxal 5'-phosphate as a cofactor.

The protein resides in the cytoplasm. The enzyme catalyses L-seryl-tRNA(Sec) + selenophosphate + H(+) = L-selenocysteinyl-tRNA(Sec) + phosphate. The protein operates within aminoacyl-tRNA biosynthesis; selenocysteinyl-tRNA(Sec) biosynthesis; selenocysteinyl-tRNA(Sec) from L-seryl-tRNA(Sec) (bacterial route): step 1/1. Converts seryl-tRNA(Sec) to selenocysteinyl-tRNA(Sec) required for selenoprotein biosynthesis. The polypeptide is L-seryl-tRNA(Sec) selenium transferase (Escherichia coli O7:K1 (strain IAI39 / ExPEC)).